The following is a 982-amino-acid chain: Polyribonucleotide nucleotidyltransferase 2, mitochondrial (982 aa).

A mitochondrion-targeting transit peptide spans 1-39 (MSMAVASLRLLARGGRRRARFPAPLSVPGGRAAFLSGAA). Positions 624 to 678 (PRLATLSFSSDSLRKLLFHRKKIEQETGARVSVSDGTVTIVAKTQPIMDKAIEKV) constitute a KH domain. The S1 motif 1 domain occupies 689 to 757 (GRTYKGVVSS…LRGNIKLSLK (69 aa)). Disordered stretches follow at residues 792 to 814 (PSKDANAEPSISKDEDNMIEETP) and 832 to 892 (QDVT…NDVL). 2 stretches are compositionally biased toward low complexity: residues 846–855 (AKSSPKLSKP) and 868–877 (KKTSGASTTA). The region spanning 920-982 (GDVVTAKVYQ…KGIPVFSLLD (63 aa)) is the S1 motif 2 domain.

The protein belongs to the polyribonucleotide nucleotidyltransferase family.

It is found in the mitochondrion. The enzyme catalyses RNA(n+1) + phosphate = RNA(n) + a ribonucleoside 5'-diphosphate. Functionally, involved in the 3'-end maturation of mitochondrial mRNAs, rRNAs and tRNAs. Functions as a poly(A) mRNA 3'-5' degrading phosphorylase. The polypeptide is Polyribonucleotide nucleotidyltransferase 2, mitochondrial (PNP2) (Oryza sativa subsp. japonica (Rice)).